Reading from the N-terminus, the 162-residue chain is NADH-quinone oxidoreductase subunit I 2 (162 aa).

2 4Fe-4S ferredoxin-type domains span residues 53–83 (LRRY…IESE) and 93–122 (TRYD…ETRI). Cys63, Cys66, Cys69, Cys73, Cys102, Cys105, Cys108, and Cys112 together coordinate [4Fe-4S] cluster.

It belongs to the complex I 23 kDa subunit family. NDH-1 is composed of 14 different subunits. Subunits NuoA, H, J, K, L, M, N constitute the membrane sector of the complex. It depends on [4Fe-4S] cluster as a cofactor.

Its subcellular location is the cell inner membrane. The enzyme catalyses a quinone + NADH + 5 H(+)(in) = a quinol + NAD(+) + 4 H(+)(out). NDH-1 shuttles electrons from NADH, via FMN and iron-sulfur (Fe-S) centers, to quinones in the respiratory chain. The immediate electron acceptor for the enzyme in this species is believed to be ubiquinone. Couples the redox reaction to proton translocation (for every two electrons transferred, four hydrogen ions are translocated across the cytoplasmic membrane), and thus conserves the redox energy in a proton gradient. The chain is NADH-quinone oxidoreductase subunit I 2 from Nitrosospira multiformis (strain ATCC 25196 / NCIMB 11849 / C 71).